The following is an 842-amino-acid chain: uncharacterized protein (842 aa).

2 disordered regions span residues 1–20 (MLHFLFHSGSSSNRNSSPKE) and 142–209 (NSSS…TSSS). The uDENN FNIP1/2-type domain occupies 35–422 (TKDVTFRLVL…TAKSFHKCIL (388 aa)). A compositionally biased stretch (polar residues) spans 183-209 (ANLSSSSKNMKDSTLSSQKARSNTSSS). The cDENN FNIP1/2-type domain occupies 430 to 772 (APLIKPSVFS…CYEIHEFPSE (343 aa)). Phosphoserine is present on residues serine 573 and serine 590. A dDENN FNIP1/2-type domain is found at 777-842 (YAPFLLKEHH…KEVLRVCSHC (66 aa)).

Its subcellular location is the cytoplasm. This is an uncharacterized protein from Schizosaccharomyces pombe (strain 972 / ATCC 24843) (Fission yeast).